The chain runs to 352 residues: Protein RecA (352 aa).

Residue G67–T74 participates in ATP binding.

Belongs to the RecA family.

Its subcellular location is the cytoplasm. In terms of biological role, can catalyze the hydrolysis of ATP in the presence of single-stranded DNA, the ATP-dependent uptake of single-stranded DNA by duplex DNA, and the ATP-dependent hybridization of homologous single-stranded DNAs. It interacts with LexA causing its activation and leading to its autocatalytic cleavage. This Chlamydia trachomatis serovar L2 (strain ATCC VR-902B / DSM 19102 / 434/Bu) protein is Protein RecA.